Consider the following 690-residue polypeptide: MKSLPPEMRQILGDCYPHIRELNPAQRSAIEAGYLESEDNYIIAIPTASGKTLLGIIAALKTVMEGGRVIYTVPLLSIQNEKIKEFRKLEEHGIRVGKDPRTSDIAVMVFESFDSLTRFSWNILREVDLLIVDEFHMIGEYTRGPVIESAITRARTLNPSVRIVALSATLSNMDEIAGWLDARVVEHDYRPVPLHREVLDTEMFGVREKNDVVLKVLERSLEDGSQTLAFVSTRRFTESLASHLADKISGKIPDDMVESFREVAGKVLEVPKSRGSPPTSTCLKLAECLEAGIAFHHAGLFNRQREIIEDEFRDGNILMITATPSLMYGVNLPSRTVVIRDYTRWTSQGPRRIPVFDYEQMSGRAGRPQYDDAGYSYLIARSHDEAMDLEEYYIRGEVERTTSRIIENRDALYRQIIAQVASGLSGTTEELADFFRNTFYGYQMVEGPFSDSFGMDSIQYEVENATEYLMRNRILYPGPEGFSATEFGLLIAKSNYSVETAIKLHQFASEMDEMDIYRLIYEITRTPDMPLISFKGRKSRDPVRDKLMEHGLFLMDVGNEEATAAALIEWINERTEYEIENAFHVYAASTRRSAYEASKIVKFFGKICEIMGVYRHSSQLEILSARLYYGVKEDAIPLVVGVRGLGRVRARKIIKTFGEDLRHVREDELKRIDGIGPKMAGAIRRYCERF.

ATP is bound by residues Gln-26 and Ile-45 to Thr-52. A Helicase ATP-binding domain is found at Ala-32–Asp-188. Positions Asp-133–His-136 match the DEAH box motif. One can recognise a Helicase C-terminal domain in the interval Glu-208–Ile-417.

This sequence belongs to the helicase family. Hel308 subfamily. Monomer. Binds replication protein A (RPA), in presence and absence of DNA.

It carries out the reaction Couples ATP hydrolysis with the unwinding of duplex DNA by translocating in the 3'-5' direction.. It catalyses the reaction ATP + H2O = ADP + phosphate + H(+). Functionally, DNA-dependent ATPase and 3'-5' DNA helicase that may be involved in repair of stalled replication forks. Helicase with 3'-to 5'- polarity; able to unwind over 100 bp of DNA at 50 degrees Celsius. Unwinds forked DNA, preferentially on lagging strand forks; has weaker activity on Holliday junctions. Displaces the invading strand in DNA D-loops. Unwinds short oligonucleotides from dsDNA with 3'- but not blunt ends or 5'-ssDNA tails in an ATP-dependent manner. ATPase activity is stimulated by ssDNA but not dsDNA, protein binds ssDNA, dsDNA with 5'- or 3'-overhangs but not blunt ended dsDNA and replication forks. Replication forks bind both this protein and RPA. RPA does not stimulate the helicase activity of this protein. The polypeptide is ATP-dependent DNA helicase Hel308 (Methanothermobacter thermautotrophicus (strain ATCC 29096 / DSM 1053 / JCM 10044 / NBRC 100330 / Delta H) (Methanobacterium thermoautotrophicum)).